A 275-amino-acid polypeptide reads, in one-letter code: Ribosomal RNA small subunit methyltransferase A (275 aa).

Positions 21, 23, 48, 69, 94, and 115 each coordinate S-adenosyl-L-methionine.

Belongs to the class I-like SAM-binding methyltransferase superfamily. rRNA adenine N(6)-methyltransferase family. RsmA subfamily.

Its subcellular location is the cytoplasm. It carries out the reaction adenosine(1518)/adenosine(1519) in 16S rRNA + 4 S-adenosyl-L-methionine = N(6)-dimethyladenosine(1518)/N(6)-dimethyladenosine(1519) in 16S rRNA + 4 S-adenosyl-L-homocysteine + 4 H(+). Functionally, specifically dimethylates two adjacent adenosines (A1518 and A1519) in the loop of a conserved hairpin near the 3'-end of 16S rRNA in the 30S particle. May play a critical role in biogenesis of 30S subunits. The chain is Ribosomal RNA small subunit methyltransferase A from Clostridium botulinum (strain Loch Maree / Type A3).